A 314-amino-acid chain; its full sequence is Protein translocase subunit SecF (314 aa).

Helical transmembrane passes span 17 to 37, 137 to 157, 158 to 178, 188 to 210, 250 to 270, and 272 to 292; these read AVAV…TRGL, QGTY…WWRY, ELNF…ITLG, SLPV…IVVF, TLIV…GFAF, and LLVG…LLLV.

This sequence belongs to the SecD/SecF family. SecF subfamily. As to quaternary structure, forms a complex with SecD. Part of the essential Sec protein translocation apparatus which comprises SecA, SecYEG and auxiliary proteins SecDF. Other proteins may also be involved.

The protein localises to the cell inner membrane. Functionally, part of the Sec protein translocase complex. Interacts with the SecYEG preprotein conducting channel. SecDF uses the proton motive force (PMF) to complete protein translocation after the ATP-dependent function of SecA. This is Protein translocase subunit SecF from Desulfurispirillum indicum (strain ATCC BAA-1389 / DSM 22839 / S5).